The sequence spans 349 residues: Homeobox-leucine zipper protein HOX7 (349 aa).

A disordered region spans residues 42 to 186; the sequence is RATRRDEQDD…PKQKSDLANR (145 aa). Composition is skewed to polar residues over residues 89-99 and 121-135; these read SAETGSANSEM and SSPSSMQEASTRQQV. Residues 150–209 constitute a DNA-binding region (homeobox); sequence GARKKLRLSKEQSSFLEDSFKEHSTLTPKQKSDLANRLNLRPRQVEVWFQNRRARTKLKQ. Residues 167–183 show a composition bias toward basic and acidic residues; it reads DSFKEHSTLTPKQKSDL. Residues 208 to 252 are leucine-zipper; that stretch reads KQTEVDCEHLKRCCERLTRENRRLQREVAELRGTLRTTTSSYPPL.

It belongs to the HD-ZIP homeobox family. Class II subfamily. As to quaternary structure, homodimer. May form a heterodimer with HOX1, HOX2 or HOX3. In terms of tissue distribution, expressed in seedlings, roots, leaves, nodes, internodes, flowers and embryo.

The protein resides in the nucleus. Probable transcription factor that binds to the DNA sequence 5'-CAAT[GC]ATTG-3'. In Oryza sativa subsp. japonica (Rice), this protein is Homeobox-leucine zipper protein HOX7 (HOX7).